We begin with the raw amino-acid sequence, 238 residues long: MTTPAYKRVLLKLSGEALMGDDPYGINRATIERMVADVSEVSRLGVELAIVIGGGNIFRGVAPGAEGMDRATADYMGMLATVMNSLALADAMRQVGITARVMSAIAIEQVVEPYVRPKALQYLEEGKIVVFAAGTGNPFFTTDTAAALRGAEIGAEIVLKATKVDGVYSADPNKDPDATRYSTITFDEAISKHLQVMDATAFALCRDQKLPIKVFSIVKPGALKRVVMGEDEGTLVHV.

ATP is bound at residue 12 to 15 (KLSG). G54 lines the UMP pocket. 2 residues coordinate ATP: G55 and R59. UMP is bound by residues D74 and 135 to 142 (TGNPFFTT). Residues T162, Y168, and D171 each coordinate ATP.

This sequence belongs to the UMP kinase family. In terms of assembly, homohexamer.

The protein localises to the cytoplasm. The catalysed reaction is UMP + ATP = UDP + ADP. It functions in the pathway pyrimidine metabolism; CTP biosynthesis via de novo pathway; UDP from UMP (UMPK route): step 1/1. Its activity is regulated as follows. Inhibited by UTP. Catalyzes the reversible phosphorylation of UMP to UDP. The chain is Uridylate kinase from Herminiimonas arsenicoxydans.